Reading from the N-terminus, the 247-residue chain is Probable transcriptional regulatory protein Dalk_2958 (247 aa).

Belongs to the TACO1 family.

The protein localises to the cytoplasm. In Desulfatibacillum aliphaticivorans, this protein is Probable transcriptional regulatory protein Dalk_2958.